A 348-amino-acid polypeptide reads, in one-letter code: Putative methylesterase 14, chloroplastic (348 aa).

2 disordered regions span residues 1–29 (MGNKIISMMKKDSKDGGGGGSKSKRMNRS) and 60–80 (GSMSRRVGSTSTRKRTLSDPF). The transit peptide at 1–76 (MGNKIISMMK…GSTSTRKRTL (76 aa)) directs the protein to the chloroplast. Position 77 is a phosphoserine (Ser-77). Ser-172 acts as the Acyl-ester intermediate in catalysis. Active-site charge relay system residues include Asp-299 and His-327.

It belongs to the AB hydrolase superfamily. Methylesterase family.

The protein localises to the plastid. Its subcellular location is the chloroplast. Its function is as follows. Putative methylesterase. The polypeptide is Putative methylesterase 14, chloroplastic (Arabidopsis thaliana (Mouse-ear cress)).